A 380-amino-acid polypeptide reads, in one-letter code: Cytochrome b (380 aa).

4 helical membrane passes run Phe-34–Met-54, Trp-78–Ile-99, Trp-114–Leu-134, and Phe-179–Thr-199. Heme b is bound by residues His-84 and His-98. Residues His-183 and His-197 each coordinate heme b. His-202 contacts a ubiquinone. 4 helical membrane-spanning segments follow: residues Leu-227 to Ser-247, Leu-289 to His-309, Leu-321 to Ser-341, and Phe-348 to Pro-368.

Belongs to the cytochrome b family. In terms of assembly, the cytochrome bc1 complex contains 11 subunits: 3 respiratory subunits (MT-CYB, CYC1 and UQCRFS1), 2 core proteins (UQCRC1 and UQCRC2) and 6 low-molecular weight proteins (UQCRH/QCR6, UQCRB/QCR7, UQCRQ/QCR8, UQCR10/QCR9, UQCR11/QCR10 and a cleavage product of UQCRFS1). This cytochrome bc1 complex then forms a dimer. Requires heme b as cofactor.

Its subcellular location is the mitochondrion inner membrane. Functionally, component of the ubiquinol-cytochrome c reductase complex (complex III or cytochrome b-c1 complex) that is part of the mitochondrial respiratory chain. The b-c1 complex mediates electron transfer from ubiquinol to cytochrome c. Contributes to the generation of a proton gradient across the mitochondrial membrane that is then used for ATP synthesis. This chain is Cytochrome b (MT-CYB), found in Oceanodroma tristrami (Tristram's storm-petrel).